A 159-amino-acid polypeptide reads, in one-letter code: Ribosomal RNA large subunit methyltransferase H (159 aa).

S-adenosyl-L-methionine-binding positions include Leu76, Gly108, and 127-132 (FGRLTL).

It belongs to the RNA methyltransferase RlmH family. Homodimer.

The protein resides in the cytoplasm. The enzyme catalyses pseudouridine(1915) in 23S rRNA + S-adenosyl-L-methionine = N(3)-methylpseudouridine(1915) in 23S rRNA + S-adenosyl-L-homocysteine + H(+). Functionally, specifically methylates the pseudouridine at position 1915 (m3Psi1915) in 23S rRNA. The sequence is that of Ribosomal RNA large subunit methyltransferase H from Listeria monocytogenes serovar 1/2a (strain ATCC BAA-679 / EGD-e).